The chain runs to 333 residues: Ketol-acid reductoisomerase (NAD(P)(+)) (333 aa).

The KARI N-terminal Rossmann domain maps to 2 to 182 (AKIYYDEDAS…GATRAGVIET (181 aa)). Residues 25-28 (YGSQ), Ser51, and 83-86 (DTVQ) each bind NADP(+). His108 is a catalytic residue. Gly134 is an NADP(+) binding site. In terms of domain architecture, KARI C-terminal knotted spans 183-327 (TFREETETDL…KELRQMMPWL (145 aa)). Mg(2+)-binding residues include Asp191, Glu195, Glu227, and Glu231. Ser252 is a substrate binding site.

It belongs to the ketol-acid reductoisomerase family. Mg(2+) is required as a cofactor.

It catalyses the reaction (2R)-2,3-dihydroxy-3-methylbutanoate + NAD(+) = (2S)-2-acetolactate + NADH + H(+). It carries out the reaction (2R)-2,3-dihydroxy-3-methylbutanoate + NADP(+) = (2S)-2-acetolactate + NADPH + H(+). Its pathway is amino-acid biosynthesis; L-isoleucine biosynthesis; L-isoleucine from 2-oxobutanoate: step 2/4. The protein operates within amino-acid biosynthesis; L-valine biosynthesis; L-valine from pyruvate: step 2/4. Its function is as follows. Involved in the biosynthesis of branched-chain amino acids (BCAA). Catalyzes an alkyl-migration followed by a ketol-acid reduction of (S)-2-acetolactate (S2AL) to yield (R)-2,3-dihydroxy-isovalerate. In the isomerase reaction, S2AL is rearranged via a Mg-dependent methyl migration to produce 3-hydroxy-3-methyl-2-ketobutyrate (HMKB). In the reductase reaction, this 2-ketoacid undergoes a metal-dependent reduction by NADPH or NADH to yield (R)-2,3-dihydroxy-isovalerate. The sequence is that of Ketol-acid reductoisomerase (NAD(P)(+)) from Hydrogenobaculum sp. (strain Y04AAS1).